A 450-amino-acid chain; its full sequence is Tubulin alpha chain, testis-specific (450 aa).

Positions Met-1–Cys-4 match the MREC motif motif. Gln-11 contributes to the GTP binding site. Lys-40 carries the N6-acetyllysine modification. GTP is bound by residues Glu-71, Ser-140, Gly-144, Thr-145, Thr-179, Asn-206, and Asn-228. Glu-71 provides a ligand contact to Mg(2+). The active site involves Glu-254.

The protein belongs to the tubulin family. Dimer of alpha and beta chains. A typical microtubule is a hollow water-filled tube with an outer diameter of 25 nm and an inner diameter of 15 nM. Alpha-beta heterodimers associate head-to-tail to form protofilaments running lengthwise along the microtubule wall with the beta-tubulin subunit facing the microtubule plus end conferring a structural polarity. Microtubules usually have 13 protofilaments but different protofilament numbers can be found in some organisms and specialized cells. Mg(2+) serves as cofactor. In terms of processing, some glutamate residues at the C-terminus are polyglycylated, resulting in polyglycine chains on the gamma-carboxyl group. Glycylation is mainly limited to tubulin incorporated into axonemes (cilia and flagella) whereas glutamylation is prevalent in neuronal cells, centrioles, axonemes, and the mitotic spindle. Both modifications can coexist on the same protein on adjacent residues, and lowering polyglycylation levels increases polyglutamylation, and reciprocally. The precise function of polyglycylation is still unclear. Post-translationally, some glutamate residues at the C-terminus are polyglutamylated, resulting in polyglutamate chains on the gamma-carboxyl group. Polyglutamylation plays a key role in microtubule severing by spastin (SPAST). SPAST preferentially recognizes and acts on microtubules decorated with short polyglutamate tails: severing activity by SPAST increases as the number of glutamates per tubulin rises from one to eight, but decreases beyond this glutamylation threshold. Acetylation of alpha chains at Lys-40 is located inside the microtubule lumen. This modification has been correlated with increased microtubule stability, intracellular transport and ciliary assembly. In terms of processing, undergoes a tyrosination/detyrosination cycle, the cyclic removal and re-addition of a C-terminal tyrosine residue by the enzymes tubulin tyrosine carboxypeptidase (MATCAP, VASH1 or VASH2) and tubulin tyrosine ligase (TTL), respectively. Post-translationally, tyrosination promotes microtubule interaction with CAP-Gly microtubule plus-end tracking proteins. Tyrosinated tubulins regulate the initiation of dynein-driven motility. Detyrosination is involved in metaphase plate congression by guiding chromosomes during mitosis. Detyrosination increases microtubules-dependent mechanotransduction in dystrophic cardiac and skeletal muscle. In cardiomyocytes, detyrosinated microtubules are required to resist to contractile compression during contraction. As to expression, testis specific.

It is found in the cytoplasm. The protein localises to the cytoskeleton. The enzyme catalyses GTP + H2O = GDP + phosphate + H(+). In terms of biological role, tubulin is the major constituent of microtubules, a cylinder consisting of laterally associated linear protofilaments composed of alpha- and beta-tubulin heterodimers. Microtubules grow by the addition of GTP-tubulin dimers to the microtubule end, where a stabilizing cap forms. Below the cap, tubulin dimers are in GDP-bound state, owing to GTPase activity of alpha-tubulin. In Oncorhynchus mykiss (Rainbow trout), this protein is Tubulin alpha chain, testis-specific.